Reading from the N-terminus, the 271-residue chain is MAASSLSSATSYLHSFRRRNSCVSLQGVSDMECNIARTNVSVWRSSANYVRMDCGVKKFSGKAVVVKQLQNRAGTFRCATMEEVEAEKSLIETNTKQRMEKTIETIRSNFNSVRTNRASPTMLDRIEVEYYGTPVSLKSIAQISTPDASSLLISPYDKSSLKAIEKAIVTSQLGVSPNNDGEVIRLSLPPLTSDRRKELAKVVSKLAEEGKVAVRNIRRDALKSYEKLEKEKKLSEDNVKDLSADLQKLTDEYMKKVESIYKQKEQELMKV.

The N-terminal 78 residues, 1-78 (MAASSLSSAT…LQNRAGTFRC (78 aa)), are a transit peptide targeting the chloroplast. Residues 213-260 (AVRNIRRDALKSYEKLEKEKKLSEDNVKDLSADLQKLTDEYMKKVESI) adopt a coiled-coil conformation.

It belongs to the RRF family. Modeling onto the 70S ribosome suggests it binds to PSRP1. As to expression, restricted to photosynthetic tissues.

The protein localises to the plastid. It localises to the chloroplast stroma. Responsible for the release of ribosomes from messenger RNA at the termination of chloroplastic protein biosynthesis. The sequence is that of Ribosome-recycling factor, chloroplastic (RRF) from Spinacia oleracea (Spinach).